Consider the following 452-residue polypeptide: Septin-10 (452 aa).

Residues 36–302 (QGFCFNILCV…ELYRRCKLQE (267 aa)) form the Septin-type G domain. Residues 46-53 (GETGIGKS) form a G1 motif region. GTP is bound by residues 46 to 53 (GETGIGKS), G101, 182 to 190 (KADTISKSE), G236, and R251. A G3 motif region spans residues 98-101 (NTVG). Residues 181–184 (AKAD) are G4 motif. S414 carries the post-translational modification Phosphoserine.

This sequence belongs to the TRAFAC class TrmE-Era-EngA-EngB-Septin-like GTPase superfamily. Septin GTPase family. In terms of assembly, septins polymerize into heterooligomeric protein complexes that form filaments, and can associate with cellular membranes, actin filaments and microtubules. GTPase activity is required for filament formation. Interacts with ADGB. In terms of processing, proteolytically cleaved in vitro in a calmodulin-dependent manner.

Its subcellular location is the cytoplasm. The protein localises to the cytoskeleton. The protein resides in the cell projection. It is found in the cilium. It localises to the flagellum. Its function is as follows. Filament-forming cytoskeletal GTPase. May play a role in cytokinesis (Potential). This is Septin-10 from Mus musculus (Mouse).